The sequence spans 205 residues: uncharacterized protein (205 aa).

Positions 1–42 (MSRKRDKPYTNRHTPARISKRRRPWAPSSSEHDEIIDKPITK) are disordered. Over residues 14–24 (TPARISKRRRP) the composition is skewed to basic residues. Basic and acidic residues predominate over residues 30–40 (SEHDEIIDKPI). An RRM domain is found at 47 to 122 (PALVVMGLPA…KKLEVVWATD (76 aa)). The segment at 170–191 (PRSDNTKGISGDGGISSPATTS) is disordered.

This is an uncharacterized protein from Arabidopsis thaliana (Mouse-ear cress).